We begin with the raw amino-acid sequence, 441 residues long: Glutamate--tRNA ligase 2 (441 aa).

The short motif at 9–19 is the 'HIGH' region element; the sequence is PSPTGYIHVGN. The 'KMSKS' region signature appears at 239 to 243; the sequence is ALSKR. Lys-242 provides a ligand contact to ATP.

Belongs to the class-I aminoacyl-tRNA synthetase family. Glutamate--tRNA ligase type 1 subfamily. In terms of assembly, monomer.

The protein localises to the cytoplasm. The catalysed reaction is tRNA(Glu) + L-glutamate + ATP = L-glutamyl-tRNA(Glu) + AMP + diphosphate. Functionally, catalyzes the attachment of glutamate to tRNA(Glu) in a two-step reaction: glutamate is first activated by ATP to form Glu-AMP and then transferred to the acceptor end of tRNA(Glu). The polypeptide is Glutamate--tRNA ligase 2 (Cereibacter sphaeroides (strain ATCC 17029 / ATH 2.4.9) (Rhodobacter sphaeroides)).